Reading from the N-terminus, the 447-residue chain is Maltoporin (447 aa).

The first 26 residues, 1–26 (MELRMKKVSVIAAAVAATLAAGSAFA), serve as a signal peptide directing secretion.

The protein belongs to the porin LamB (TC 1.B.3) family. Homotrimer formed of three 18-stranded antiparallel beta-barrels, containing three independent channels.

It is found in the cell outer membrane. The enzyme catalyses beta-maltose(in) = beta-maltose(out). Involved in the transport of maltose and maltodextrins. This is Maltoporin from Vibrio campbellii (strain ATCC BAA-1116).